The chain runs to 417 residues: UDP-N-acetylglucosamine 1-carboxyvinyltransferase (417 aa).

22-23 is a phosphoenolpyruvate binding site; sequence KN. Position 92 (R92) interacts with UDP-N-acetyl-alpha-D-glucosamine. C116 serves as the catalytic Proton donor. C116 is modified (2-(S-cysteinyl)pyruvic acid O-phosphothioketal). The UDP-N-acetyl-alpha-D-glucosamine site is built by D304 and I326.

It belongs to the EPSP synthase family. MurA subfamily.

It localises to the cytoplasm. The enzyme catalyses phosphoenolpyruvate + UDP-N-acetyl-alpha-D-glucosamine = UDP-N-acetyl-3-O-(1-carboxyvinyl)-alpha-D-glucosamine + phosphate. It functions in the pathway cell wall biogenesis; peptidoglycan biosynthesis. In terms of biological role, cell wall formation. Adds enolpyruvyl to UDP-N-acetylglucosamine. This Geobacter sulfurreducens (strain ATCC 51573 / DSM 12127 / PCA) protein is UDP-N-acetylglucosamine 1-carboxyvinyltransferase.